A 417-amino-acid polypeptide reads, in one-letter code: Glucose-1-phosphate adenylyltransferase (417 aa).

Alpha-D-glucose 1-phosphate-binding positions include Tyr105, Gly170, 185–186 (EK), and Ser203.

It belongs to the bacterial/plant glucose-1-phosphate adenylyltransferase family. As to quaternary structure, homotetramer.

The enzyme catalyses alpha-D-glucose 1-phosphate + ATP + H(+) = ADP-alpha-D-glucose + diphosphate. It functions in the pathway glycan biosynthesis; glycogen biosynthesis. Involved in the biosynthesis of ADP-glucose, a building block required for the elongation reactions to produce glycogen. Catalyzes the reaction between ATP and alpha-D-glucose 1-phosphate (G1P) to produce pyrophosphate and ADP-Glc. This is Glucose-1-phosphate adenylyltransferase from Granulibacter bethesdensis (strain ATCC BAA-1260 / CGDNIH1).